The sequence spans 575 residues: Septation ring formation regulator EzrA (575 aa).

The Extracellular portion of the chain corresponds to 1–8 (MSNGQLIY). The chain crosses the membrane as a helical span at residues 9 to 27 (LMVAIAVILVLAYVVAIFL). Over 28–575 (RKRNEGRLEA…YEKTRETIRF (548 aa)) the chain is Cytoplasmic. Coiled-coil stretches lie at residues 110–191 (QIDQ…FVTL), 265–301 (LYEA…LYDI), 354–416 (VRRI…IEKD), and 456–526 (TASN…IQEA).

It belongs to the EzrA family.

The protein resides in the cell membrane. Functionally, negative regulator of FtsZ ring formation; modulates the frequency and position of FtsZ ring formation. Inhibits FtsZ ring formation at polar sites. Interacts either with FtsZ or with one of its binding partners to promote depolymerization. The sequence is that of Septation ring formation regulator EzrA from Streptococcus pneumoniae (strain JJA).